The chain runs to 159 residues: MSQVLTTYETPVLPEWVDYNGHLRDAFYLLVFSYATDALMAHIGLDSQNRDASGHSLFTLECHLNFLHEVKEGARVEVRTQLLGHDRKRLHIHHALYLPGSGQALALSEQMLLHVSLDGPRSAPFEGEVLARVEALAEAHRALPVPEGVGRVIGLPPVR.

The protein belongs to the betainyl-CoA thioesterase family.

The enzyme catalyses N,N,N-trimethylglycyl-CoA + H2O = glycine betaine + CoA + H(+). Its pathway is amine and polyamine metabolism; carnitine metabolism. Catalyzes the cleavage of betainyl-CoA (N,N,N-trimethylglycyl-CoA) into glycine betaine and coenzyme A. Is involved in a L-carnitine degradation pathway that allows P.aeruginosa to grow on L-carnitine as the sole source of carbon and nitrogen. The polypeptide is Betainyl-CoA thioesterase (Pseudomonas aeruginosa (strain ATCC 15692 / DSM 22644 / CIP 104116 / JCM 14847 / LMG 12228 / 1C / PRS 101 / PAO1)).